Here is a 486-residue protein sequence, read N- to C-terminus: Cardiolipin synthase A (486 aa).

A run of 2 helical transmembrane segments spans residues 3 to 23 (TFYTVLSWLTFFFYWLLIAGV) and 38 to 58 (MTWLLIIYILPLVGVIAYFAF). PLD phosphodiesterase domains follow at residues 219–246 (MDLRQHRKIVLIDNYISYTGSMNMVDPR) and 399–426 (EDGLLHTKSVMVDGQLSMVGSVNLDMRS). Active-site residues include H224, K226, D231, H404, K406, and D411.

It belongs to the phospholipase D family. Cardiolipin synthase subfamily. ClsA sub-subfamily.

It is found in the cell inner membrane. The catalysed reaction is 2 a 1,2-diacyl-sn-glycero-3-phospho-(1'-sn-glycerol) = a cardiolipin + glycerol. Functionally, catalyzes the reversible phosphatidyl group transfer from one phosphatidylglycerol molecule to another to form cardiolipin (CL) (diphosphatidylglycerol) and glycerol. The polypeptide is Cardiolipin synthase A (Proteus mirabilis (strain HI4320)).